Consider the following 96-residue polypeptide: MKNIVIIITVAVLFNLFGESLQMVPFETYPLNQDDSKYDCLTNGYNPYCQDICKLHNTKEGYCKKFFCICEKLSKENVKFLAEIIDTCNERLDEIL.

Positions 1 to 22 (MKNIVIIITVAVLFNLFGESLQ) are cleaved as a signal peptide. In terms of domain architecture, LCN-type CS-alpha/beta spans 26–89 (FETYPLNQDD…FLAEIIDTCN (64 aa)). Cystine bridges form between C40/C63, C49/C68, and C53/C70.

This sequence belongs to the long (3 C-C) scorpion toxin superfamily. Expressed by the venom gland.

Its subcellular location is the secreted. This chain is Neurotoxin 23, found in Lychas mucronatus (Chinese swimming scorpion).